Here is a 455-residue protein sequence, read N- to C-terminus: UDP-glycosyltransferase 79B2 (455 aa).

UDP-alpha-D-glucose is bound by residues Ser266, 325–327 (VQQ), 342–350 (HCGFGSMWE), and 364–367 (LGDQ).

It belongs to the UDP-glycosyltransferase family.

The sequence is that of UDP-glycosyltransferase 79B2 (UGT79B2) from Arabidopsis thaliana (Mouse-ear cress).